Consider the following 172-residue polypeptide: L-methionine sulfoximine/L-methionine sulfone acetyltransferase (172 aa).

One can recognise an N-acetyltransferase domain in the interval alanine 3–aspartate 166. Residues arginine 75–phenylalanine 77 and glutamate 85–serine 87 each bind substrate. Acetyl-CoA contacts are provided by residues valine 88–valine 90, glycine 96–valine 101, and asparagine 127.

In terms of assembly, homodimer.

The catalysed reaction is L-methionine sulfoximine + acetyl-CoA = N-acetyl-L-methionine sulfoximine + CoA + H(+). The enzyme catalyses L-methionine sulfone + acetyl-CoA = N-acetyl-L-methionine sulfone + CoA + H(+). Its function is as follows. Plays a role in the resistance against the toxic effects of L-methionine sulfoximine (MSX), a rare amino acid, which inhibits glutamine synthetase (GlnA). Catalyzes the acetylation of L-methionine sulfoximine (MSX). The polypeptide is L-methionine sulfoximine/L-methionine sulfone acetyltransferase (Pseudomonas aeruginosa (strain ATCC 15692 / DSM 22644 / CIP 104116 / JCM 14847 / LMG 12228 / 1C / PRS 101 / PAO1)).